The chain runs to 146 residues: MAEAEKLFKINIVTPNGLIYSHRGSSVSMRAIDGDRQILYNHLPILTPLTIGEVRVQRGADVDHKVDHIAVSGGIIEFANNVATIIADNAERARNIDLSRAEAAKQRAEAHITEAKEKHDEQLLERAQIALRRAVNRIHVYGALHK.

The protein belongs to the ATPase epsilon chain family. As to quaternary structure, F-type ATPases have 2 components, CF(1) - the catalytic core - and CF(0) - the membrane proton channel. CF(1) has five subunits: alpha(3), beta(3), gamma(1), delta(1), epsilon(1). CF(0) has three main subunits: a, b and c.

Its subcellular location is the cell membrane. Produces ATP from ADP in the presence of a proton gradient across the membrane. The polypeptide is ATP synthase epsilon chain (Lactobacillus delbrueckii subsp. bulgaricus (strain ATCC 11842 / DSM 20081 / BCRC 10696 / JCM 1002 / NBRC 13953 / NCIMB 11778 / NCTC 12712 / WDCM 00102 / Lb 14)).